The sequence spans 422 residues: Structural polyprotein (422 aa).

Over 1–359 (SVTEHFNVYK…WPHEIIQYYY (359 aa)) the chain is Extracellular. Asn-200 and Asn-262 each carry an N-linked (GlcNAc...) asparagine; by host glycan. A helical membrane pass occupies residues 360 to 382 (GLYPAATIAAVSGXSLMALLTLA). The Cytoplasmic segment spans residues 383 to 422 (ATCCMLATARRKCLTPYALTPGAVVPLTLGLXXCAPRANA). S-palmitoyl cysteine; by host attachment occurs at residues Cys-385, Cys-395, and Cys-416. The interval 395–415 (CLTPYALTPGAVVPLTLGLXX) is transient transmembrane before p62-6K protein processing.

As to quaternary structure, spike glycoprotein E2: Processing of the precursor of protein E3/E2 into E2 and E3 results in a heterodimer of the spike glycoproteins E2 and E1. Spike glycoprotein E2: Spike at virion surface are constituted of three E2-E1 heterodimers. Spike glycoprotein E2: Interacts with 6K protein. In terms of processing, structural polyprotein: Specific enzymatic cleavages in vivo yield mature proteins. Capsid protein is auto-cleaved during polyprotein translation, unmasking a signal peptide at the N-terminus of the precursor of E3/E2. The remaining polyprotein is then targeted to the host endoplasmic reticulum, where host signal peptidase cleaves it into pE2, 6K and E1 proteins. pE2 is further processed to mature E3 and E2 by host furin in trans-Golgi vesicle. Spike glycoprotein E2: Palmitoylated via thioester bonds. These palmitoylations may induce disruption of the C-terminus transmembrane. This would result in the reorientation of E2 C-terminus from lumenal to cytoplasmic side. Post-translationally, spike glycoprotein E2: N-glycosylated.

The protein localises to the virion membrane. The protein resides in the host cell membrane. Its function is as follows. Spike glycoprotein E2: Plays a role in viral attachment to target host cell, by binding to the cell receptor. Synthesized as a p62 precursor which is processed by furin at the cell membrane just before virion budding, giving rise to E2-E1 heterodimer. The p62-E1 heterodimer is stable, whereas E2-E1 is unstable and dissociate at low pH. p62 is processed at the last step, presumably to avoid E1 fusion activation before its final export to cell surface. E2 C-terminus contains a transitory transmembrane that would be disrupted by palmitoylation, resulting in reorientation of the C-terminal tail from lumenal to cytoplasmic side. This step is critical since E2 C-terminus is involved in budding by interacting with capsid proteins. This release of E2 C-terminus in cytoplasm occurs lately in protein export, and precludes premature assembly of particles at the endoplasmic reticulum membrane. The sequence is that of Structural polyprotein from Ross river virus (strain 213970) (RRV).